The following is a 324-amino-acid chain: Mevalonate kinase (324 aa).

103 to 113 (PPRAGLGSSAA) is a binding site for ATP. D154 functions as the Proton acceptor in the catalytic mechanism.

Belongs to the GHMP kinase family. Mevalonate kinase subfamily. In terms of assembly, homodimer. The cofactor is Mg(2+).

The protein resides in the cytoplasm. The enzyme catalyses (R)-mevalonate + ATP = (R)-5-phosphomevalonate + ADP + H(+). Its pathway is isoprenoid biosynthesis; isopentenyl diphosphate biosynthesis via mevalonate pathway; isopentenyl diphosphate from (R)-mevalonate: step 1/3. Its function is as follows. Catalyzes the phosphorylation of (R)-mevalonate (MVA) to (R)-mevalonate 5-phosphate (MVAP). Functions in the mevalonate (MVA) pathway leading to isopentenyl diphosphate (IPP), a key precursor for the biosynthesis of isoprenoid compounds such as archaeal membrane lipids. In Aeropyrum pernix (strain ATCC 700893 / DSM 11879 / JCM 9820 / NBRC 100138 / K1), this protein is Mevalonate kinase.